The primary structure comprises 366 residues: 3-isopropylmalate dehydrogenase (366 aa).

76–89 contacts NAD(+); the sequence is GPKWDANPSHLRPE. The substrate site is built by arginine 96, arginine 106, arginine 134, and aspartate 219. Mg(2+)-binding residues include aspartate 219, aspartate 243, and aspartate 247. 277 to 289 is an NAD(+) binding site; the sequence is GSAPDIAGKGIAN.

This sequence belongs to the isocitrate and isopropylmalate dehydrogenases family. LeuB type 1 subfamily. Homodimer. Mg(2+) is required as a cofactor. Mn(2+) serves as cofactor.

The protein localises to the cytoplasm. The enzyme catalyses (2R,3S)-3-isopropylmalate + NAD(+) = 4-methyl-2-oxopentanoate + CO2 + NADH. Its pathway is amino-acid biosynthesis; L-leucine biosynthesis; L-leucine from 3-methyl-2-oxobutanoate: step 3/4. Catalyzes the oxidation of 3-carboxy-2-hydroxy-4-methylpentanoate (3-isopropylmalate) to 3-carboxy-4-methyl-2-oxopentanoate. The product decarboxylates to 4-methyl-2 oxopentanoate. This chain is 3-isopropylmalate dehydrogenase, found in Oceanobacillus iheyensis (strain DSM 14371 / CIP 107618 / JCM 11309 / KCTC 3954 / HTE831).